A 120-amino-acid chain; its full sequence is Large ribosomal subunit protein uL18 (120 aa).

This sequence belongs to the universal ribosomal protein uL18 family. As to quaternary structure, part of the 50S ribosomal subunit; part of the 5S rRNA/L5/L18/L25 subcomplex. Contacts the 5S and 23S rRNAs.

Functionally, this is one of the proteins that bind and probably mediate the attachment of the 5S RNA into the large ribosomal subunit, where it forms part of the central protuberance. The protein is Large ribosomal subunit protein uL18 of Rhodopseudomonas palustris (strain HaA2).